A 962-amino-acid polypeptide reads, in one-letter code: Protein kinase ORF73 (962 aa).

Disordered stretches follow at residues 1–28 and 62–152; these read MADR…NDRP and STPA…RATT. The segment covering 81 to 90 has biased composition (acidic residues); sequence DSDDDDEEDN. Over residues 143 to 152 the composition is skewed to polar residues; the sequence is YDTTGRRATT. Residues 301–595 enclose the Protein kinase domain; it reads LRAAPVLGKG…ASDLLKSPRY (295 aa). ATP-binding positions include 307 to 315 and Lys-324; that span reads LGKGYFGTV. The Proton acceptor role is filled by Asp-434.

It belongs to the protein kinase superfamily. Ser/Thr protein kinase family.

The enzyme catalyses L-seryl-[protein] + ATP = O-phospho-L-seryl-[protein] + ADP + H(+). It catalyses the reaction L-threonyl-[protein] + ATP = O-phospho-L-threonyl-[protein] + ADP + H(+). The protein is Protein kinase ORF73 (ORF73) of Ictaluridae (bullhead catfishes).